Reading from the N-terminus, the 89-residue chain is UPF0250 protein Bphyt_0500 (89 aa).

This sequence belongs to the UPF0250 family.

The protein is UPF0250 protein Bphyt_0500 of Paraburkholderia phytofirmans (strain DSM 17436 / LMG 22146 / PsJN) (Burkholderia phytofirmans).